The sequence spans 617 residues: Threonine--tRNA ligase (617 aa).

Residues 209-502 (DHRRLGKDLD…MTENYAGDFP (294 aa)) form a catalytic region. Cys-302, His-353, and His-479 together coordinate Zn(2+).

It belongs to the class-II aminoacyl-tRNA synthetase family. As to quaternary structure, homodimer. Zn(2+) is required as a cofactor.

It localises to the cytoplasm. The catalysed reaction is tRNA(Thr) + L-threonine + ATP = L-threonyl-tRNA(Thr) + AMP + diphosphate + H(+). Its function is as follows. Catalyzes the attachment of threonine to tRNA(Thr) in a two-step reaction: L-threonine is first activated by ATP to form Thr-AMP and then transferred to the acceptor end of tRNA(Thr). Also edits incorrectly charged L-seryl-tRNA(Thr). This is Threonine--tRNA ligase from Synechococcus sp. (strain CC9311).